The following is a 198-amino-acid chain: Ribonuclease HII (198 aa).

The region spanning 10–198 (HLVAGVDEVG…PVKRALGLVC (189 aa)) is the RNase H type-2 domain. 3 residues coordinate a divalent metal cation: D16, E17, and D108.

This sequence belongs to the RNase HII family. Mn(2+) is required as a cofactor. Requires Mg(2+) as cofactor.

It is found in the cytoplasm. The catalysed reaction is Endonucleolytic cleavage to 5'-phosphomonoester.. Functionally, endonuclease that specifically degrades the RNA of RNA-DNA hybrids. The protein is Ribonuclease HII of Enterobacter sp. (strain 638).